Consider the following 61-residue polypeptide: Probable tautomerase SERP0934 (61 aa).

The active-site Proton acceptor; via imino nitrogen is the proline 2.

It belongs to the 4-oxalocrotonate tautomerase family.

The protein is Probable tautomerase SERP0934 of Staphylococcus epidermidis (strain ATCC 35984 / DSM 28319 / BCRC 17069 / CCUG 31568 / BM 3577 / RP62A).